Reading from the N-terminus, the 1040-residue chain is Multidrug resistance protein MdtB (1040 aa).

12 helical membrane-spanning segments follow: residues Phe-16 to Ile-36, Leu-347 to Ala-367, Ile-369 to Leu-389, Leu-396 to Ile-416, Ile-440 to Phe-460, Phe-472 to Pro-492, Trp-537 to Ile-557, Leu-863 to Ile-883, Phe-888 to Ala-908, Ile-911 to Val-931, Ile-968 to Val-988, and Ile-998 to Ile-1018.

Belongs to the resistance-nodulation-cell division (RND) (TC 2.A.6) family. MdtB subfamily. Part of a tripartite efflux system composed of MdtA, MdtB and MdtC. MdtB forms a heteromultimer with MdtC.

It is found in the cell inner membrane. In terms of biological role, the MdtABC tripartite complex confers resistance against novobiocin and deoxycholate. The chain is Multidrug resistance protein MdtB from Escherichia coli O45:K1 (strain S88 / ExPEC).